The chain runs to 370 residues: 2-Hydroxyacid oxidase 1 (370 aa).

Residues 1 to 365 (MLPRLICIND…DKTLVRKNPL (365 aa)) enclose the FMN hydroxy acid dehydrogenase domain. Tyrosine 26 contributes to the glyoxylate binding site. FMN-binding positions include 79-81 (ATA), serine 108, and glutamine 130. Tyrosine 132 is a glyoxylate binding site. Position 158 (threonine 158) interacts with FMN. A glyoxylate-binding site is contributed by arginine 167. Lysine 184 bears the N6-succinyllysine mark. 2 positions are modified to phosphoserine: serine 194 and serine 230. 2 residues coordinate FMN: lysine 236 and serine 258. Glyoxylate contacts are provided by histidine 260 and arginine 263. The active-site Proton acceptor is the histidine 260. FMN is bound by residues 291-295 (DGGVR) and 314-315 (GR). Residues 368–370 (SKI) carry the Microbody targeting signal motif.

The protein belongs to the FMN-dependent alpha-hydroxy acid dehydrogenase family. In terms of assembly, homotetramer. The cofactor is FMN. As to expression, highly expressed in liver.

It is found in the peroxisome matrix. The catalysed reaction is a (2S)-2-hydroxycarboxylate + O2 = a 2-oxocarboxylate + H2O2. It carries out the reaction glycolate + O2 = glyoxylate + H2O2. The enzyme catalyses glyoxylate + O2 + H2O = oxalate + H2O2 + H(+). It catalyses the reaction 2-hydroxyhexadecanoate + O2 = 2-oxohexadecanoate + H2O2. The catalysed reaction is 2-hydroxyoctanoate + O2 = 2-oxooctanoate + H2O2. It functions in the pathway amino-acid biosynthesis; glycine biosynthesis. Inhibited by its product oxalate. Inhibited by high concentrations of dichlorophenolindophenol (DCIP) in vitro. In terms of biological role, broad substrate specificity (S)-2-hydroxy-acid oxidase that preferentially oxidizes glycolate. The glyoxylate produced by the oxidation of glycolate can then be utilized by alanine-glyoxylate aminotransferase for the peroxisomal synthesis of glycine; this pathway appears to be an important step for the detoxification of glyoxylate which, if allowed to accumulate, may be metabolized to oxalate with formation of kidney stones. Can also catalyze the oxidation of glyoxylate, and long chain hydroxyacids such as 2-hydroxyhexadecanoate and 2-hydroxyoctanoate, albeit with much lower catalytic efficiency. Active in vitro with the artificial electron acceptor 2,6-dichlorophenolindophenol (DCIP), but O2 is believed to be the physiological electron acceptor, leading to the production of H2O2. Is not active on L-lactate and 2-hydroxybutanoate. In Homo sapiens (Human), this protein is 2-Hydroxyacid oxidase 1.